The following is a 356-amino-acid chain: Isopentenyl-diphosphate delta-isomerase (356 aa).

8–9 contacts substrate; it reads RK. Residues 66–68, S96, and N124 each bind FMN; that span reads AIT. 96 to 98 provides a ligand contact to substrate; the sequence is SQR. Q160 is a substrate binding site. Mg(2+) is bound at residue E161. FMN-binding positions include K201, T231, 280–282, and 301–302; these read GIR and AL.

The protein belongs to the IPP isomerase type 2 family. Homooctamer. Dimer of tetramers. Requires FMN as cofactor. It depends on NADPH as a cofactor. Mg(2+) is required as a cofactor.

It localises to the cytoplasm. The enzyme catalyses isopentenyl diphosphate = dimethylallyl diphosphate. In terms of biological role, involved in the biosynthesis of isoprenoids. Catalyzes the 1,3-allylic rearrangement of the homoallylic substrate isopentenyl (IPP) to its allylic isomer, dimethylallyl diphosphate (DMAPP). The protein is Isopentenyl-diphosphate delta-isomerase of Methanococcus aeolicus (strain ATCC BAA-1280 / DSM 17508 / OCM 812 / Nankai-3).